Reading from the N-terminus, the 345-residue chain is Delta(6)-protoilludene synthase (345 aa).

The Mg(2+) site is built by D84, N220, S224, and E228. Positions D84–D88 match the DDXXD motif motif. Residues R309 and Y310 each contribute to the (2E,6E)-farnesyl diphosphate site.

The protein belongs to the terpene synthase family. Monomer. Mg(2+) is required as a cofactor.

It catalyses the reaction (2E,6E)-farnesyl diphosphate = Delta(6)-protoilludene + diphosphate. The protein operates within secondary metabolite biosynthesis. Delta(6)-protoilludene synthase, part of the gene cluster that mediates the biosynthesis of melleolides, a range of antifungal and phytotoxic polyketide derivatives composed of an orsellinic acid (OA) moiety esterified to various sesquiterpene alcohols. The first step in melleolides biosynthesis is performed by the delta(6)-protoilludene synthase PRO1 which catalyzes the cyclization of farnesyl diphosphate to protoilludene. The orsellinic acid synthase armB produces OA by condensing acetyl-CoA with 3 malonyl-CoA units in a three-round chain elongation reaction folowed by a C2-C7 ring closure. ArmB further catalyzes the trans-esterification of OA to the various sesquiterpene alcohols resulting from the hydroxylation of protoilludene. The melleolides cluster also includes 5 cytochrome P450 monooxygenases, 4 NAD(+)-dependent oxidoreductases, one flavin-dependent oxidoreductase, and one O-methyltransferase. The cytochrome P450 monooxygenases may be involved in protoilludene hydroxylation to elaborate melleolides with multiple alcohol groups, such as melleolide D, which carries alcohol functionalities at C-4, C-5, C-10, and C-13. The role of the NAD(+)-dependent enzymes remains unknown. Numerous melleolides, including arnamial, show 5'-O-methylation of the aromatic moiety which may be catalyzed by the methyltransferase encoded in the cluster. The flavin-dependent oxidoreductase might represent the dehydrogenase yielding the aldehyde in position 1 of arnamial and other melleolides. Finally, several halogenases, localized outside of the cluster, are able to catalyze the transfer of a single chlorine atom to the melleolide backbone, resulting in a 6'-chloromelleolide product. This Armillaria gallica (Bulbous honey fungus) protein is Delta(6)-protoilludene synthase.